The primary structure comprises 667 residues: Smc-like protein Sph2 (667 aa).

2 coiled-coil regions span residues 153 to 295 (GSIQ…SLAT) and 355 to 517 (GRLD…AITA).

It belongs to the Sph1/Sph2 family.

The protein localises to the cytoplasm. May play a role in replication. This Halobacterium salinarum (strain ATCC 29341 / DSM 671 / R1) protein is Smc-like protein Sph2 (sph2).